Consider the following 80-residue polypeptide: Serine protease inhibitor Kazal-type 1 (80 aa).

An N-terminal signal peptide occupies residues 1–23; it reads MKVAVIFLLSALALLSLAGNTFS. The Kazal-like domain maps to 27–80; sequence TGKEASCHDAVAGCPRIYDPVCGTDGITYANECVLCFENRKRIEPVLIRKGGPC. 3 cysteine pairs are disulfide-bonded: C33–C62, C40–C59, and C48–C80.

In the genital tract, expressed only in male accessory glands including seminal vesicle, coagulating gland and prostate.

The protein resides in the secreted. In terms of biological role, serine protease inhibitor which exhibits anti-trypsin activity. In the pancreas, protects against trypsin-catalyzed premature activation of zymogens. Functionally, in the male reproductive tract, binds to sperm heads where it modulates sperm capacitance by inhibiting calcium uptake and nitrogen oxide (NO) production. In Mus musculus (Mouse), this protein is Serine protease inhibitor Kazal-type 1.